The sequence spans 549 residues: Chaperonin GroEL (549 aa).

ATP-binding positions include 29-32 (TAGP), K50, 86-90 (DGTTT), G418, and D499.

This sequence belongs to the chaperonin (HSP60) family. In terms of assembly, forms a cylinder of 14 subunits composed of two heptameric rings stacked back-to-back. Interacts with the co-chaperonin GroES.

The protein resides in the cytoplasm. The enzyme catalyses ATP + H2O + a folded polypeptide = ADP + phosphate + an unfolded polypeptide.. Functionally, together with its co-chaperonin GroES, plays an essential role in assisting protein folding. The GroEL-GroES system forms a nano-cage that allows encapsulation of the non-native substrate proteins and provides a physical environment optimized to promote and accelerate protein folding. In Wolbachia pipientis wMel, this protein is Chaperonin GroEL.